Here is a 284-residue protein sequence, read N- to C-terminus: L-ribulose-5-phosphate 3-epimerase UlaE (284 aa).

Belongs to the L-ribulose-5-phosphate 3-epimerase family.

The enzyme catalyses L-ribulose 5-phosphate = L-xylulose 5-phosphate. It functions in the pathway cofactor degradation; L-ascorbate degradation; D-xylulose 5-phosphate from L-ascorbate: step 3/4. Its function is as follows. Catalyzes the isomerization of L-xylulose-5-phosphate to L-ribulose-5-phosphate. Is involved in the anaerobic L-ascorbate utilization. The chain is L-ribulose-5-phosphate 3-epimerase UlaE from Shigella flexneri.